We begin with the raw amino-acid sequence, 204 residues long: MRFVLPKGRLYQDSIKVLELAGIKVPKRDERALIWGDGNNEFLLARAFDVPVYVEHGIDIGIAGSDVVEERGSDVFIPLELPFGKCRLSIAVPKEKVVDPENMDGYKIATKYPNITKRYFENLNIEVEVIKLHGSIELAPRIGIADAIVDIVETGNTLRSNGLVEVAKIMDVSALLLVNRISQKMFFEEINSFITKIRRSVYGH.

The protein belongs to the ATP phosphoribosyltransferase family. Short subfamily.

Its subcellular location is the cytoplasm. The enzyme catalyses 1-(5-phospho-beta-D-ribosyl)-ATP + diphosphate = 5-phospho-alpha-D-ribose 1-diphosphate + ATP. It functions in the pathway amino-acid biosynthesis; L-histidine biosynthesis; L-histidine from 5-phospho-alpha-D-ribose 1-diphosphate: step 1/9. Functionally, catalyzes the condensation of ATP and 5-phosphoribose 1-diphosphate to form N'-(5'-phosphoribosyl)-ATP (PR-ATP). Has a crucial role in the pathway because the rate of histidine biosynthesis seems to be controlled primarily by regulation of HisG enzymatic activity. The protein is ATP phosphoribosyltransferase (hisG) of Pyrococcus furiosus (strain ATCC 43587 / DSM 3638 / JCM 8422 / Vc1).